Consider the following 208-residue polypeptide: Uracil phosphoribosyltransferase (208 aa).

Residues Arg-78, Arg-103, and 130-138 contribute to the 5-phospho-alpha-D-ribose 1-diphosphate site; that span reads DPMFATGGT. Residues Ile-193 and 198–200 contribute to the uracil site; that span reads GDA. A 5-phospho-alpha-D-ribose 1-diphosphate-binding site is contributed by Asp-199.

Belongs to the UPRTase family. Mg(2+) is required as a cofactor.

It carries out the reaction UMP + diphosphate = 5-phospho-alpha-D-ribose 1-diphosphate + uracil. Its pathway is pyrimidine metabolism; UMP biosynthesis via salvage pathway; UMP from uracil: step 1/1. Its activity is regulated as follows. Allosterically activated by GTP. Its function is as follows. Catalyzes the conversion of uracil and 5-phospho-alpha-D-ribose 1-diphosphate (PRPP) to UMP and diphosphate. This is Uracil phosphoribosyltransferase from Campylobacter jejuni subsp. jejuni serotype O:6 (strain 81116 / NCTC 11828).